The chain runs to 384 residues: Cyclin-J (384 aa).

A Cyclin N-terminal domain is found at 15–143 (DIHQTLRYKE…LLETFEWNLC (129 aa)).

It belongs to the cyclin family. Cyclin J subfamily.

This chain is Cyclin-J (ccnj), found in Xenopus laevis (African clawed frog).